A 304-amino-acid chain; its full sequence is E3 ubiquitin-protein ligase RNF115 (304 aa).

Alanine 2 carries the N-acetylalanine modification. Positions proline 95–serine 138 are disordered. Basic and acidic residues predominate over residues glutamine 98 to histidine 110. Serine 132 and serine 133 each carry phosphoserine; by PKB/AKT1. The RING-type zinc-finger motif lies at cysteine 228–arginine 269. The disordered stretch occupies residues leucine 272–phenylalanine 304. The span at arginine 279–serine 296 shows a compositional bias: polar residues.

Interacts with RAB7A. Interacts with EGFR and FLT3. Interacts with BST2. Interacts with STX17. Interacts with YWHAE. In terms of processing, phosphorylated by AKT1, allowing association with the 14-3-3 chaperones that facilitates associating with TLRs. RING-type zinc finger-dependent and E2-dependent autoubiquitination. Post-translationally, deubiquitinated by USP9X; antogonizing its autoubiquitination and subsequent proteasomal degradation. In terms of tissue distribution, expressed at extremely low levels in normal breast, prostate, lung, colon. Higher levels of expression are detected in heart, skeletal muscle, testis as well as in breast and prostate cancer cells.

It is found in the cytoplasm. The protein localises to the nucleus. Its subcellular location is the endoplasmic reticulum. It localises to the golgi apparatus. It catalyses the reaction S-ubiquitinyl-[E2 ubiquitin-conjugating enzyme]-L-cysteine + [acceptor protein]-L-lysine = [E2 ubiquitin-conjugating enzyme]-L-cysteine + N(6)-ubiquitinyl-[acceptor protein]-L-lysine.. Its pathway is protein modification; protein ubiquitination. E3 ubiquitin-protein ligase that catalyzes the 'Lys-48'- and/or 'Lys-63'-linked polyubiquitination of various substrates and thereby plays a role in a number of signaling pathways including autophagy, innate immunity, cell proliferation and cell death. Plays a role in the endosomal trafficking and degradation of membrane receptors including EGFR, FLT3, MET and CXCR4 through their polyubiquitination. Participates together with BST2 in antiviral immunity by facilitating the internalization of HIV-1 virions into intracellular vesicles leading to their lysosomal degradation. Also possesses an antiviral activity independently of BST2 by promoting retroviral GAG proteins ubiquitination, redistribution to endo-lysosomal compartments and, ultimately, lysosomal degradation. Catalyzes distinct types of ubiquitination on MAVS and STING1 at different phases of viral infection to promote innate antiviral response. Mediates the 'Lys-48'-linked ubiquitination of MAVS leading to its proteasomal degradation and ubiquitinates STING1 via 'Lys-63'-linked polyubiquitination, critical for its oligomerization and the subsequent recruitment of TBK1. Plays a positive role in the autophagosome-lysosome fusion by interacting with STX17 and enhancing its stability without affecting 'Lys-48'- or 'Lys-63'-linked polyubiquitination levels, which in turn promotes autophagosome maturation. Negatively regulates TLR-induced expression of proinflammatory cytokines by catalyzing 'Lys-11'-linked ubiquitination of RAB1A and RAB13 to inhibit post-ER trafficking of TLRs to the Golgi by RAB1A and subsequently from the Golgi apparatus to the cell surface by RAB13. The chain is E3 ubiquitin-protein ligase RNF115 from Homo sapiens (Human).